We begin with the raw amino-acid sequence, 348 residues long: Photosystem II protein D1 (348 aa).

3 consecutive transmembrane segments (helical) span residues 33–50, 122–137, and 146–160; these read YIGW…LATV, HFIF…EWEF, and WIFV…ASCA. Residue His122 participates in chlorophyll a binding. Residue Trp130 participates in pheophytin a binding. [CaMn4O5] cluster contacts are provided by Asp174 and Glu193. Residues 201–222 traverse the membrane as a helical segment; sequence FHILGVAGVFGGSLFSAMHGSL. Residue His202 coordinates chlorophyll a. Residues His219 and 268–269 contribute to the a quinone site; that span reads SF. Position 219 (His219) interacts with Fe cation. Fe cation is bound at residue His276. Residues 278-292 form a helical membrane-spanning segment; that stretch reads FLAAWPVIGIWFTAL. Residues His336, Glu337, Asp346, and Ala348 each contribute to the [CaMn4O5] cluster site.

The protein belongs to the reaction center PufL/M/PsbA/D family. As to quaternary structure, PSII is composed of 1 copy each of membrane proteins PsbA, PsbB, PsbC, PsbD, PsbE, PsbF, PsbH, PsbI, PsbJ, PsbK, PsbL, PsbM, PsbT, PsbX, PsbY, PsbZ, Psb30/Ycf12, at least 3 peripheral proteins of the oxygen-evolving complex and a large number of cofactors. It forms dimeric complexes. Requires The D1/D2 heterodimer binds P680, chlorophylls that are the primary electron donor of PSII, and subsequent electron acceptors. It shares a non-heme iron and each subunit binds pheophytin, quinone, additional chlorophylls, carotenoids and lipids. D1 provides most of the ligands for the Mn4-Ca-O5 cluster of the oxygen-evolving complex (OEC). There is also a Cl(-1) ion associated with D1 and D2, which is required for oxygen evolution. The PSII complex binds additional chlorophylls, carotenoids and specific lipids. as cofactor. Post-translationally, tyr-165 forms a radical intermediate that is referred to as redox-active TyrZ, YZ or Y-Z.

The protein resides in the plastid. Its subcellular location is the chloroplast thylakoid membrane. It carries out the reaction 2 a plastoquinone + 4 hnu + 2 H2O = 2 a plastoquinol + O2. Its function is as follows. Photosystem II (PSII) is a light-driven water:plastoquinone oxidoreductase that uses light energy to abstract electrons from H(2)O, generating O(2) and a proton gradient subsequently used for ATP formation. It consists of a core antenna complex that captures photons, and an electron transfer chain that converts photonic excitation into a charge separation. The D1/D2 (PsbA/PsbD) reaction center heterodimer binds P680, the primary electron donor of PSII as well as several subsequent electron acceptors. This is Photosystem II protein D1 from Heterocapsa rotundata (Dinoflagellate).